A 1245-amino-acid polypeptide reads, in one-letter code: TAL effector protein Brg11 (1245 aa).

2 disordered regions span residues 1–87 (MRIG…LVPE) and 173–205 (CPQAFASPPRAPRSARARRARTGGDAWPAPTFL). The segment covering 67-87 (PRRPLPVAPASAPPAPSLVPE) has biased composition (pro residues). The short motif at 185 to 191 (RSARARR) is the Nuclear localization signal 1 element. One copy of the Cryptic repeat -1 repeat lies at 286-320 (LTRAHIVDIARQRSGDLALQALLPVATALTAAPLR). One copy of the Cryptic repeat 0 repeat lies at 321–354 (LSASQIATVAQYGERPAIQALYRLRRKLTRAPLH). 16 Core repeat repeats span residues 355–389 (LTPQQVVAIASNTGGKRALEAVCVQLPVLRAAPYR), 390–424 (LSTEQVVAIASNKGGKQALEAVKAHLLDLLGAPYV), 425–459 (LDTEQVVAIASHNGGKQALEAVKADLLDLRGAPYA), 460–494 (LSTEQVVAIASHNGGKQALEAVKADLLELRGAPYA), 495–529 (LSTEQVVAIASHNGGKQALEAVKAHLLDLRGVPYA), 530–564 (LSTEQVVAIASHNGGKQALEAVKAQLLDLRGAPYA), 565–599 (LSTAQVVAIASNGGGKQALEGIGEQLLKLRTAPYG), 600–634 (LSTEQVVAIASHDGGKQALEAVGAQLVALRAAPYA), 635–669 (LSTEQVVAIASNKGGKQALEAVKAQLLELRGAPYA), 670–704 (LSTAQVVAIASHDGGNQALEAVGTQLVALRAAPYA), 705–739 (LSTEQVVAIASHDGGKQALEAVGAQLVALRAAPYA), 740–774 (LNTEQVVAIASSHGGKQALEAVRALFPDLRAAPYA), 775–809 (LSTAQLVAIASNPGGKQALEAVRALFRELRAAPYA), 810–844 (LSTEQVVAIASNHGGKQALEAVRALFRGLRAAPYG), 845–879 (LSTAQVVAIASSNGGKQALEAVWALLPVLRATPYD), and 880–914 (LNTAQIVAIASHDGGKPALEAVWAKLPVLRGAPYA). The Cryptic repeat +1 repeat unit spans residues 915–948 (LSTAQVVAIACISGQQALEAIEAHMPTLRQASHS). A Cryptic repeat +2 repeat occupies 949–982 (LSPERVAAIACIGGRSAVEAVRQGLPVKAIRRIR). 3 consecutive short sequence motifs (nuclear localization signal) follow at residues 980 to 983 (RIRR), 1108 to 1111 (HRKR), and 1145 to 1148 (RRKR). Residues 1096–1138 (SPGMAGQSACSPHRKRPAETAIAPRSIRRSPNNAGQPSEPWPD) are disordered. An activation domain region spans residues 1237–1245 (DWLLQILET).

It belongs to the transcription activator-like effector (TALE) family. RipTAL/RTL subfamily.

The protein localises to the secreted. The protein resides in the host nucleus. Functionally, exported into plant cells, where it is targeted to the nucleus and probably acts as a transcription factor. Binds DNA in a sequence-specific manner. May contribute to plant pathogenicity. The protein is TAL effector protein Brg11 of Ralstonia nicotianae (strain ATCC BAA-1114 / GMI1000) (Ralstonia solanacearum).